The chain runs to 127 residues: Large ribosomal subunit protein bL17 (127 aa).

It belongs to the bacterial ribosomal protein bL17 family. In terms of assembly, part of the 50S ribosomal subunit. Contacts protein L32.

This Stenotrophomonas maltophilia (strain R551-3) protein is Large ribosomal subunit protein bL17.